The sequence spans 64 residues: Conotoxin Cal6.26 (64 aa).

The N-terminal stretch at 1–22 is a signal peptide; it reads MKLTCVMIVAVLVLTVCKVVTS. Intrachain disulfides connect Cys32–Cys50, Cys40–Cys54, and Cys49–Cys60.

As to expression, expressed by the venom duct.

It is found in the secreted. Probable neurotoxin. In Californiconus californicus (California cone), this protein is Conotoxin Cal6.26.